We begin with the raw amino-acid sequence, 293 residues long: Putative metal ABC transporter substrate-binding protein Hpf (293 aa).

The signal sequence occupies residues 1–22 (MRNSFKIMTALALGLFAMQANA). Residues 23–48 (KFKVVTTFTVIQDIAQNVAGNAATVE) are interaction with host components. His-58, His-123, Glu-189, and Asp-264 together coordinate a divalent metal cation.

It belongs to the bacterial solute-binding protein 9 family. Interacts with host laminin and vitronectin. Can interact with both immobilized and soluble vitronectin.

It localises to the cell outer membrane. Its subcellular location is the cell surface. It is found in the periplasm. Its function is as follows. Part of an ATP-binding cassette (ABC) transport system involved in metal import. Binds a metal with high affinity and specificity and delivers it to the membrane permease for translocation into the cytoplasm. Acts as an adhesin that promotes binding of H.influenzae to host laminin and vitronectin. In addition, interaction with serum vitronectin plays an important role in bacterial serum resistance. This chain is Putative metal ABC transporter substrate-binding protein Hpf (hpf), found in Haemophilus influenzae (strain NTHi 3655).